We begin with the raw amino-acid sequence, 305 residues long: Chromatin modification-related protein EAF3 (305 aa).

The region spanning 14-67 (VLAYHGPLLYEARVILAEVWDESNTLLGTVGPHYFIHYKGWKQTWDEWVPESRL) is the Tudor-knot domain. The tract at residues 86–127 (AKKGRSTGGSGGTGSPGAGKGGLKDKKKDTKKRGRDAMESES) is disordered. A compositionally biased stretch (gly residues) spans 91–106 (STGGSGGTGSPGAGKG). The MRG domain maps to 131 to 304 (KRPEVKIVIP…TTTHYQNLSR (174 aa)).

It belongs to the MRG family. As to quaternary structure, component of the NuA4 histone acetyltransferase complex.

Its subcellular location is the nucleus. Involved in deacetylation of histones, chromatin assembly and chromosome segregation. May act as a transcriptional oscillator, directing histone deacetylases to specific chromosomal domains. Component of the NuA4 histone acetyltransferase complex which is involved in transcriptional activation of selected genes principally by acetylation of nucleosomal histone H4 and H2A. The NuA4 complex is also involved in DNA repair. This is Chromatin modification-related protein EAF3 (EAF3) from Cryptococcus neoformans var. neoformans serotype D (strain B-3501A) (Filobasidiella neoformans).